A 600-amino-acid chain; its full sequence is UvrABC system protein C (600 aa).

Residues 15–92 (DKPGCYLMKD…IKKYQPYYNV (78 aa)) form the GIY-YIG domain. Residues 197-232 (SQVKQDLTEKMTQASMNLEFERAAEFRDQLKYIEQT) form the UVR domain.

The protein belongs to the UvrC family. As to quaternary structure, interacts with UvrB in an incision complex.

It is found in the cytoplasm. In terms of biological role, the UvrABC repair system catalyzes the recognition and processing of DNA lesions. UvrC both incises the 5' and 3' sides of the lesion. The N-terminal half is responsible for the 3' incision and the C-terminal half is responsible for the 5' incision. The protein is UvrABC system protein C of Lactobacillus gasseri (strain ATCC 33323 / DSM 20243 / BCRC 14619 / CIP 102991 / JCM 1131 / KCTC 3163 / NCIMB 11718 / NCTC 13722 / AM63).